The following is a 191-amino-acid chain: Sporulation-specific protein (191 aa).

Its function is as follows. Not essential for sporulation. This chain is Sporulation-specific protein (SPR6), found in Saccharomyces cerevisiae (strain ATCC 204508 / S288c) (Baker's yeast).